The sequence spans 26 residues: Coenzyme PQQ synthesis protein A (26 aa).

The segment at residues 16-20 (EINSY) is a cross-link (pyrroloquinoline quinone (Glu-Tyr)).

It belongs to the PqqA family.

The protein operates within cofactor biosynthesis; pyrroloquinoline quinone biosynthesis. Required for coenzyme pyrroloquinoline quinone (PQQ) biosynthesis. PQQ is probably formed by cross-linking a specific glutamate to a specific tyrosine residue and excising these residues from the peptide. In Gluconacetobacter diazotrophicus (strain ATCC 49037 / DSM 5601 / CCUG 37298 / CIP 103539 / LMG 7603 / PAl5), this protein is Coenzyme PQQ synthesis protein A.